The primary structure comprises 156 residues: Biotin carboxyl carrier protein of acetyl-CoA carboxylase (156 aa).

The 84-residue stretch at 73-156 folds into the Biotinyl-binding domain; it reads PAAAEISGHI…EFDEPLVVIE (84 aa). At lysine 122 the chain carries N6-biotinyllysine.

As to quaternary structure, homodimer.

The protein operates within lipid metabolism; fatty acid biosynthesis. Functionally, this protein is a component of the acetyl coenzyme A carboxylase complex; first, biotin carboxylase catalyzes the carboxylation of the carrier protein and then the transcarboxylase transfers the carboxyl group to form malonyl-CoA. This chain is Biotin carboxyl carrier protein of acetyl-CoA carboxylase (accB), found in Escherichia coli O6:H1 (strain CFT073 / ATCC 700928 / UPEC).